Reading from the N-terminus, the 102-residue chain is Large ribosomal subunit protein bL21 (102 aa).

It belongs to the bacterial ribosomal protein bL21 family. As to quaternary structure, part of the 50S ribosomal subunit. Contacts protein L20.

In terms of biological role, this protein binds to 23S rRNA in the presence of protein L20. This Bacillus licheniformis (strain ATCC 14580 / DSM 13 / JCM 2505 / CCUG 7422 / NBRC 12200 / NCIMB 9375 / NCTC 10341 / NRRL NRS-1264 / Gibson 46) protein is Large ribosomal subunit protein bL21.